A 302-amino-acid chain; its full sequence is Pantothenate synthetase (302 aa).

47–54 (MGALHEGH) provides a ligand contact to ATP. H54 serves as the catalytic Proton donor. Q79 provides a ligand contact to (R)-pantoate. Q79 is a binding site for beta-alanine. Residue 165–168 (GEKD) coordinates ATP. Q171 contacts (R)-pantoate. ATP is bound by residues V194 and 202–205 (LSSR).

Belongs to the pantothenate synthetase family. As to quaternary structure, homodimer.

The protein localises to the cytoplasm. The catalysed reaction is (R)-pantoate + beta-alanine + ATP = (R)-pantothenate + AMP + diphosphate + H(+). Its pathway is cofactor biosynthesis; (R)-pantothenate biosynthesis; (R)-pantothenate from (R)-pantoate and beta-alanine: step 1/1. In terms of biological role, catalyzes the condensation of pantoate with beta-alanine in an ATP-dependent reaction via a pantoyl-adenylate intermediate. The sequence is that of Pantothenate synthetase from Saccharopolyspora erythraea (strain ATCC 11635 / DSM 40517 / JCM 4748 / NBRC 13426 / NCIMB 8594 / NRRL 2338).